Reading from the N-terminus, the 529-residue chain is BAR/IMD domain-containing adapter protein 2-like 2 (529 aa).

One can recognise an IMD domain in the interval 1–239; sequence MAPEMDQFYR…HSPGLLGPAL (239 aa). 2 disordered regions span residues 221–327 and 403–510; these read EASR…GGAR and TSMS…TNPF. Phosphoserine occurs at positions 231, 272, and 302. Residues 299 to 313 show a composition bias toward low complexity; the sequence is SASSLYSGSAQSSRS. The SH3 domain maps to 324–387; that stretch reads GGARRVRALV…PEAYVKALEE (64 aa). 2 stretches are compositionally biased toward low complexity: residues 403–413 and 452–462; these read TSMSPMTPMNP and RSRTPSRVPSR. Pro residues predominate over residues 463–472; sequence APSPAPPPLP. 2 positions are modified to phosphoserine: S478 and S481.

In terms of tissue distribution, expressed in the epithelial layer of the intestine (at protein level).

The protein resides in the cell membrane. It is found in the cell junction. It localises to the cytoplasmic vesicle membrane. In terms of biological role, phosphoinositides-binding protein that induces the formation of planar or gently curved membrane structures. Binds to phosphoinositides, including to phosphatidylinositol 4,5-bisphosphate (PtdIns(4,5)P2) headgroups. There seems to be no clear preference for a specific phosphoinositide. The chain is BAR/IMD domain-containing adapter protein 2-like 2 (BAIAP2L2) from Homo sapiens (Human).